The sequence spans 315 residues: 4-diphosphocytidyl-2-C-methyl-D-erythritol kinase (315 aa).

The active site involves K10. 107–117 (PVAGGMAGGSA) provides a ligand contact to ATP. The active site involves D148. The tract at residues 292–315 (HPATSPVPGPAKNRGAHIVSIESE) is disordered.

This sequence belongs to the GHMP kinase family. IspE subfamily.

It carries out the reaction 4-CDP-2-C-methyl-D-erythritol + ATP = 4-CDP-2-C-methyl-D-erythritol 2-phosphate + ADP + H(+). The protein operates within isoprenoid biosynthesis; isopentenyl diphosphate biosynthesis via DXP pathway; isopentenyl diphosphate from 1-deoxy-D-xylulose 5-phosphate: step 3/6. In terms of biological role, catalyzes the phosphorylation of the position 2 hydroxy group of 4-diphosphocytidyl-2C-methyl-D-erythritol. This is 4-diphosphocytidyl-2-C-methyl-D-erythritol kinase from Corynebacterium efficiens (strain DSM 44549 / YS-314 / AJ 12310 / JCM 11189 / NBRC 100395).